A 512-amino-acid chain; its full sequence is RCC1 domain-containing protein DDB_G0279253 (512 aa).

8 RCC1 repeats span residues 1–56 (MKIY…MIID), 58–134 (GDLY…ACDN), 135–185 (NGNI…NNNN), 197–248 (SGGV…ALSS), 249–319 (ENDV…LLDI), 321–384 (FKNV…LLTN), 386–443 (DKLY…IQVY), and 454–512 (NNNI…FILP). A compositionally biased stretch (polar residues) spans 66–77 (NDSGQLGINSNE). Disordered stretches follow at residues 66–85 (NDSG…QQQQ) and 162–200 (STSN…SGGV). A compositionally biased stretch (low complexity) spans 162–196 (STSNNKNNNNNNNNNNNNNNNNNNNNNNNNNNNNN).

The protein is RCC1 domain-containing protein DDB_G0279253 of Dictyostelium discoideum (Social amoeba).